A 274-amino-acid chain; its full sequence is MAIVKCKPTSPGRRHVVKVVNPELHKGKPYAPLLEKLSKSGGRNNNGRITTRHIGGGHKQHYRLVDFKRNKDGIPAVVERLEYDPNRSANIALVLYKDGERRYILAPKGLKAGDQIQSGVDAAIKAGNTLPMRNIPVGSTVHNVEMKPGKGGQLARSAGAYVQIVARDGSYVTLRLRSGEMRKVQADCRATLGEVGNAEHMLRVLGKAGASRWRGIRPTVRGTAMNPVDHPHGGGEGRNFGKHPVTPWGVQTKGKKTRSNKRTDKFIVRRRSKK.

The disordered stretch occupies residues 221 to 274 (RGTAMNPVDHPHGGGEGRNFGKHPVTPWGVQTKGKKTRSNKRTDKFIVRRRSKK).

It belongs to the universal ribosomal protein uL2 family. As to quaternary structure, part of the 50S ribosomal subunit. Forms a bridge to the 30S subunit in the 70S ribosome.

One of the primary rRNA binding proteins. Required for association of the 30S and 50S subunits to form the 70S ribosome, for tRNA binding and peptide bond formation. It has been suggested to have peptidyltransferase activity; this is somewhat controversial. Makes several contacts with the 16S rRNA in the 70S ribosome. This chain is Large ribosomal subunit protein uL2, found in Yersinia pseudotuberculosis serotype O:1b (strain IP 31758).